Here is a 382-residue protein sequence, read N- to C-terminus: Lipid-A-disaccharide synthase (382 aa).

Belongs to the LpxB family.

It catalyses the reaction 2-N,3-O-bis[(3R)-3-hydroxytetradecanoyl]-alpha-D-glucosaminyl 1-phosphate + UDP-2-N,3-O-bis[(3R)-3-hydroxytetradecanoyl]-alpha-D-glucosamine = lipid A disaccharide (E. coli) + UDP + H(+). The catalysed reaction is a lipid X + a UDP-2-N,3-O-bis[(3R)-3-hydroxyacyl]-alpha-D-glucosamine = a lipid A disaccharide + UDP + H(+). Its pathway is glycolipid biosynthesis; lipid IV(A) biosynthesis; lipid IV(A) from (3R)-3-hydroxytetradecanoyl-[acyl-carrier-protein] and UDP-N-acetyl-alpha-D-glucosamine: step 5/6. Its function is as follows. Condensation of UDP-2,3-diacylglucosamine and 2,3-diacylglucosamine-1-phosphate to form lipid A disaccharide, a precursor of lipid A, a phosphorylated glycolipid that anchors the lipopolysaccharide to the outer membrane of the cell. The chain is Lipid-A-disaccharide synthase from Serratia proteamaculans (strain 568).